A 465-amino-acid polypeptide reads, in one-letter code: Type II restriction enzyme BsuMI component YdjA (465 aa).

As to quaternary structure, bsuMI restriction activity requires YdiR, YdiS and YdjA.

The enzyme catalyses Endonucleolytic cleavage of DNA to give specific double-stranded fragments with terminal 5'-phosphates.. In terms of biological role, a P subtype restriction enzyme that recognizes the double-stranded sequence 5'-CTCGAG-3'; the cleavage site is unknown. The sequence is that of Type II restriction enzyme BsuMI component YdjA (ydjA) from Bacillus subtilis (strain 168).